The chain runs to 440 residues: Thymidine phosphorylase (440 aa).

It belongs to the thymidine/pyrimidine-nucleoside phosphorylase family. As to quaternary structure, homodimer.

It carries out the reaction thymidine + phosphate = 2-deoxy-alpha-D-ribose 1-phosphate + thymine. The protein operates within pyrimidine metabolism; dTMP biosynthesis via salvage pathway; dTMP from thymine: step 1/2. Its function is as follows. The enzymes which catalyze the reversible phosphorolysis of pyrimidine nucleosides are involved in the degradation of these compounds and in their utilization as carbon and energy sources, or in the rescue of pyrimidine bases for nucleotide synthesis. This is Thymidine phosphorylase from Shigella dysenteriae serotype 1 (strain Sd197).